The sequence spans 118 residues: UPF0102 protein Swit_0572 (118 aa).

It belongs to the UPF0102 family.

The chain is UPF0102 protein Swit_0572 from Rhizorhabdus wittichii (strain DSM 6014 / CCUG 31198 / JCM 15750 / NBRC 105917 / EY 4224 / RW1) (Sphingomonas wittichii).